We begin with the raw amino-acid sequence, 202 residues long: Oocyte-secreted protein 1 (202 aa).

The first 21 residues, 1 to 21 (MKPFVGLLGLLLLLSFMKTCA), serve as a signal peptide directing secretion. The interval 157-183 (QPNLSTSSEDHHVSTEPWASETSRSEA) is disordered.

Belongs to the PLAC1 family. As to expression, expressed in oocytes in primary through antral-stage follicles. Expressed in liver and ovary.

It is found in the secreted. May be involved in cell differentiation. This chain is Oocyte-secreted protein 1 (Oosp1), found in Mus musculus (Mouse).